The following is a 196-amino-acid chain: ECF RNA polymerase sigma factor SigK (196 aa).

The interval 39–105 (YDQTRARVYG…RAVDRVRSEQ (67 aa)) is sigma-70 factor domain-2. Positions 62–65 (ETTQ) match the Polymerase core binding motif. The sigma-70 factor domain-4 stretch occupies residues 142-191 (CLDSLTDVQRECIQLAYYDGLTYAQVADRLAANLATIKSRMRDGIRALRK). A DNA-binding region (H-T-H motif) is located at residues 164 to 183 (YAQVADRLAANLATIKSRMR).

The protein belongs to the sigma-70 factor family. ECF subfamily. Interacts transiently with the RNA polymerase catalytic core formed by RpoA, RpoB, RpoC and RpoZ (2 alpha, 1 beta, 1 beta' and 1 omega subunit) to form the RNA polymerase holoenzyme that can initiate transcription. Interacts (via sigma-70 factor domain 4) with anti-sigma-K factor RskA.

Sigma factors are initiation factors that promote the attachment of RNA polymerase to specific initiation sites and are then released. Extracytoplasmic function (ECF) sigma factors are held in an inactive form by an anti-sigma factor until released by regulated intramembrane proteolysis. This is ECF RNA polymerase sigma factor SigK (sigK) from Mycolicibacterium vanbaalenii (strain DSM 7251 / JCM 13017 / BCRC 16820 / KCTC 9966 / NRRL B-24157 / PYR-1) (Mycobacterium vanbaalenii).